Here is a 1331-residue protein sequence, read N- to C-terminus: DNA replication ATP-dependent helicase/nuclease JHS1 (1331 aa).

Positions 1–98 are disordered; it reads MPPRKKPKSS…DMDQQLTEAS (98 aa). Residues 2 to 8 carry the Nuclear localization signal motif; sequence PPRKKPK. The segment covering 11 to 31 has biased composition (polar residues); sequence ALKSNKQSSANHSSQPSTFGI. Residues 40-52 show a composition bias toward low complexity; the sequence is QNSQSTSNSHTST. The span at 57 to 81 shows a compositional bias: polar residues; that stretch reads DQQNVNGLASDTAVLTPQNPLGTSN. A compositionally biased stretch (basic and acidic residues) spans 82-91; that stretch reads EKPDESKDMD. Positions 362–811 are nuclease activity; that stretch reads ECALYLWDEW…CKLRTGDRVI (450 aa). Cys-422, Cys-666, Cys-669, and Cys-675 together coordinate [4Fe-4S] cluster. The tract at residues 812 to 1331 is helicase activity; the sequence is LRTEVSHLTV…LNLLPGDLKP (520 aa). In terms of domain architecture, UvrD-like helicase ATP-binding spans 924 to 1271; the sequence is NNDQRQAILK…VRSREKPRSS (348 aa). 945-952 provides a ligand contact to ATP; sequence GMPGTGKT.

It belongs to the DNA2/NAM7 helicase family. Requires [4Fe-4S] cluster as cofactor. As to expression, strongly expressed in meristems, including both root and shoot apical meristems (RAM and SAM). Also present in the vasculature and in young floral tissues.

Its subcellular location is the nucleus. The protein resides in the chromosome. The catalysed reaction is ATP + H2O = ADP + phosphate + H(+). In terms of biological role, essential protein required during embryogenesis. Key enzyme involved in DNA replication and damage repair, shoot apical meristem (SAM) maintenance, and development. Involved in Okazaki fragments processing. Possesses different enzymatic activities, such as single-stranded DNA (ssDNA)-dependent ATPase, 5'-3' helicase and endonuclease activities. While the ATPase and endonuclease activities are well-defined and play a key role in Okazaki fragments processing and DSB repair, the 5'-3' DNA helicase activity is atypical: it cannot load onto its tracking strand internally and has an absolute free 5'-end requirement. The chain is DNA replication ATP-dependent helicase/nuclease JHS1 from Arabidopsis thaliana (Mouse-ear cress).